Reading from the N-terminus, the 156-residue chain is Ribosome maturation factor RimP (156 aa).

This sequence belongs to the RimP family.

Its subcellular location is the cytoplasm. Required for maturation of 30S ribosomal subunits. This is Ribosome maturation factor RimP from Dictyoglomus turgidum (strain DSM 6724 / Z-1310).